A 318-amino-acid polypeptide reads, in one-letter code: Geranylfarnesyl diphosphate synthase (318 aa).

Positions 31, 34, and 65 each coordinate isopentenyl diphosphate. Positions 72 and 76 each coordinate Mg(2+). An an all-trans-polyprenyl diphosphate-binding site is contributed by arginine 81. Position 82 (arginine 82) interacts with isopentenyl diphosphate. The an all-trans-polyprenyl diphosphate site is built by lysine 166, threonine 167, and glutamine 204.

The protein belongs to the FPP/GGPP synthase family. Homodimer. The cofactor is Mg(2+).

The catalysed reaction is isopentenyl diphosphate + (2E,6E,10E)-geranylgeranyl diphosphate = (2E,6E,10E,14E)-geranylfarnesyl diphosphate + diphosphate. Probably involved in biosynthesis of the precursor for C25 (sesterterpanyl chain) moiety of C25-C25 diether (2,3-di-O-sesterterpanyl-sn-glycero) membrane lipid. Catalyzes the condensation of isopentenyl pyrophosphate with the allylic pyrophosphates to yield all-trans geranylfarnesyl diphosphate (GFPP). Geranylgeranyl diphosphate (GGPP) is the preferred substrate, however methylallyl diphosphate (DMAPP), farnesyl diphosphate (FPP) and geranyl diphosphate (GPP) can also be used as allylic substrate. This is Geranylfarnesyl diphosphate synthase (fgs) from Aeropyrum pernix.